The chain runs to 98 residues: Large ribosomal subunit protein bL28 (98 aa).

It belongs to the bacterial ribosomal protein bL28 family.

This Mesorhizobium japonicum (strain LMG 29417 / CECT 9101 / MAFF 303099) (Mesorhizobium loti (strain MAFF 303099)) protein is Large ribosomal subunit protein bL28.